Here is a 59-residue protein sequence, read N- to C-terminus: Large ribosomal subunit protein uL30 (59 aa).

It belongs to the universal ribosomal protein uL30 family. In terms of assembly, part of the 50S ribosomal subunit.

The chain is Large ribosomal subunit protein uL30 from Photobacterium profundum (strain SS9).